An 833-amino-acid chain; its full sequence is DNA ligase (833 aa).

Residues 35-39, 84-85, and glutamate 115 each bind NAD(+); these read DVEYD and SL. The active-site N6-AMP-lysine intermediate is lysine 117. 4 residues coordinate NAD(+): arginine 138, glutamate 175, lysine 292, and lysine 316. Cysteine 410, cysteine 413, cysteine 428, and cysteine 434 together coordinate Zn(2+). A BRCT domain is found at 750 to 833; the sequence is VQAGPLDGQT…AFLSEHGQAV (84 aa).

It belongs to the NAD-dependent DNA ligase family. LigA subfamily. Mg(2+) serves as cofactor. Requires Mn(2+) as cofactor.

It catalyses the reaction NAD(+) + (deoxyribonucleotide)n-3'-hydroxyl + 5'-phospho-(deoxyribonucleotide)m = (deoxyribonucleotide)n+m + AMP + beta-nicotinamide D-nucleotide.. Its function is as follows. DNA ligase that catalyzes the formation of phosphodiester linkages between 5'-phosphoryl and 3'-hydroxyl groups in double-stranded DNA using NAD as a coenzyme and as the energy source for the reaction. It is essential for DNA replication and repair of damaged DNA. The sequence is that of DNA ligase from Xanthomonas campestris pv. campestris (strain 8004).